Reading from the N-terminus, the 303-residue chain is MEWAPMNIRAPTRLAVGRVRFYGQHHGEVNCSAFSPDGRTLLTASDDGCVYVWGTKSGRLLWRLAGHRGPVKSCCFSPDGRLIASSSSDHSIRLWDVARSKCLHVLKGHQRSVETVSFSPDSKQLASGGWDKRAIVWEVQSGRRVHLLVGHCDSIQSSDFSPTSDSLATGSWDSTVHIWDLRASTPVVSYHNLEGHTGNISCLCYSASGLLASGSWDKTICVWKPTTNNLPLQLKGHTIWVNSLAFSPDELKLASAGYSRTVKVWDCLTGKCLETLKGMLDVAHACIFTPDGKLLVSGAAVTR.

WD repeat units lie at residues 24-63 (QHHG…LLWR), 66-105 (GHRG…CLHV), 108-147 (GHQR…RVHL), 150-189 (GHCD…PVVS), 195-233 (GHTG…LPLQ), 236-277 (GHTI…ETLK), and 279-303 (MLDV…AVTR).

The protein is WD repeat-containing protein 38 (Wdr38) of Mus musculus (Mouse).